Reading from the N-terminus, the 201-residue chain is 3-isopropylmalate dehydratase small subunit (201 aa).

Belongs to the LeuD family. LeuD type 1 subfamily. In terms of assembly, heterodimer of LeuC and LeuD.

The enzyme catalyses (2R,3S)-3-isopropylmalate = (2S)-2-isopropylmalate. Its pathway is amino-acid biosynthesis; L-leucine biosynthesis; L-leucine from 3-methyl-2-oxobutanoate: step 2/4. Catalyzes the isomerization between 2-isopropylmalate and 3-isopropylmalate, via the formation of 2-isopropylmaleate. The chain is 3-isopropylmalate dehydratase small subunit from Ruegeria pomeroyi (strain ATCC 700808 / DSM 15171 / DSS-3) (Silicibacter pomeroyi).